The primary structure comprises 1202 residues: MAGHLVKYGKHRTRRSYSRIKEVLELPNLIEIQTDSYNWFMEKGLREMFDDIMPIDDFQGKLSLEFVDYQLLEPKYTVDEAREHDANYSAPLHVTLRLTNHETGEIKSQDVFFGDFPLMTDQGTFIINGAERVIVSQLVRSPGVYYSEENDKNGRPNYGATFIPNRGAWLEYETDAKNVSYVRIDRTRKLPMTELIRALGFGSDDEIIDMFGGDSETLSLTLDKDVHKNAEDSRVEEALKDIYERLRPGEPKTADSARSLLTARFFDPKRYDMAPVGRYKTNKKLMLKYRLLGQTLAETLADPDTGEVLAQKGDTVTKELLNKLEPYLDRDDFKTITYTPSDEAVVTEPVKLQKILVYSKNDPDRVVPIIGNGHIPLEYKHIEPADILASLNYFFNLQEGIGSTDDIDHLGNRRIRSVGELLQNQFRIGLARMERVVRERMSIQDPDTVTPQQLINIRPVVASIKEFFGSSQLSQFMDQTNPLGELTHKRRLSALGPGGLTRDRAGYEVRDVHYTHYGRMCPIETPEGPNIGLINSLSSYARVNKYGFIETPYRRVSWKDHKVTDKIDYLTADEEDNFIIAQANTPLNDDGSFVDDQVMARDKDDYIETSVENIDYMDVSPKQVVSVASACIPFLENDDSNRALMGANMQRQAVPLINPHAPLVSTGIDYKAAHDSGVAMIAKKPGTVEYVDAREVRVREEDGTLDTYKLMKFRRSNGGKNYNQRPIVKVGEHVDADDVLADGPSMEQGELALGQNPLIAFMTWQGYNFEDAIAINERLVKDDVYTSIHIESYESEARETKLGPEEMTREIPNVGDDALKDLDENGIVRVGAEVHDGDILVGKVTPKGMTELSAEERLLHAIFGEKSREVRDTSLRVPHGGGGIIQDVKVFTRENGDELSPGVNTMVRVYIAQKRKIQVGDKMSGRHGNKGTVSIVVPEEDMPYMPDGTPIDIMLSPMGVPSRMNIGQLLELHLGMAARRLGIHMATPVFDGASDKDVWDAVRESGFPEDGKTILYDGRTGEPFENRIAVGSMHYLKLAHMVDDKIHARSTGPYSLVTQQPLGGKAQFGGQRFGEMEVWALEAYGAAYTLQEILTYKSDDTVGRVRTYDAIINGQPIPKPGVPESFRVLVKELQALGLDMKVLDGNNKEIQLKNMDEDDDEVVNVDALAKYAEEHKADDKKNEEENKSEATSTTTDDKTNQN.

Residues 1154 to 1202 form a disordered region; it reads NMDEDDDEVVNVDALAKYAEEHKADDKKNEEENKSEATSTTTDDKTNQN. Residues 1171-1188 show a composition bias toward basic and acidic residues; it reads YAEEHKADDKKNEEENKS.

Belongs to the RNA polymerase beta chain family. As to quaternary structure, the RNAP catalytic core consists of 2 alpha, 1 beta, 1 beta' and 1 omega subunit. When a sigma factor is associated with the core the holoenzyme is formed, which can initiate transcription.

The enzyme catalyses RNA(n) + a ribonucleoside 5'-triphosphate = RNA(n+1) + diphosphate. Its function is as follows. DNA-dependent RNA polymerase catalyzes the transcription of DNA into RNA using the four ribonucleoside triphosphates as substrates. In Limosilactobacillus reuteri (strain DSM 20016) (Lactobacillus reuteri), this protein is DNA-directed RNA polymerase subunit beta.